The following is a 290-amino-acid chain: Probable proteasome subunit beta type-6 (290 aa).

The protein belongs to the peptidase T1B family. As to quaternary structure, the 26S proteasome consists of a 20S proteasome core and two 19S regulatory subunits. The 20S proteasome core is composed of 28 subunits that are arranged in four stacked rings, resulting in a barrel-shaped structure. The two end rings are each formed by seven alpha subunits, and the two central rings are each formed by seven beta subunits. The catalytic chamber with the active sites is on the inside of the barrel.

It is found in the cytoplasm. The protein resides in the nucleus. Non-catalytic component of the proteasome which degrades poly-ubiquitinated proteins in the cytoplasm and in the nucleus. It is essential for the regulated turnover of proteins and for the removal of misfolded proteins. The proteasome is a multicatalytic proteinase complex that is characterized by its ability to cleave peptides with Arg, Phe, Tyr, Leu, and Glu adjacent to the leaving group at neutral or slightly basic pH. It has an ATP-dependent proteolytic activity. This chain is Probable proteasome subunit beta type-6 (PRE7), found in Encephalitozoon cuniculi (strain GB-M1) (Microsporidian parasite).